The sequence spans 469 residues: Lactonohydrolase oryH (469 aa).

A signal peptide spans 1–20 (MYLSLRLVSLALCIAPLASA).

The protein belongs to the SMP-30/CGR1 family.

Its pathway is secondary metabolite biosynthesis. In terms of biological role, lactonohydrolase; part of the gene cluster that mediates the biosynthesis of oryzines, natural products with an unusual maleidride backbone. The two subunits of the fungal fatty acid synthase oryfasA and oryfasB probably form octenoic acid. This fatty acid is most likely activated by the acyl-CoA ligase oryP to give octenyl-CoA before the citrate synthase-like protein oryE catalyzes condensation with oxaloacetate to form tricarboxylic acid. The next steps of the pathways are conjectural, but a favorite possible route has been proposed, beginning with decarboxylation and concomitant dehydration by the decarboxylase oryM, followed by tautomerization, which may lead to the production of a diene intermediate. Reduction of this diene intermediate could give the known metabolite piliformic acid. On the pathway to oryzine B and oryzine A, however, hydroxylation of the diene by the alpha-ketoglutarate-dependent dioxygenase oryG and lactonisation by the lactonohydrolases oryH or oryL could give oryzine B directly. Finally, enoyl reduction by the dehydrogenase oryD would then convert oryzine B into oryzine A. In Aspergillus oryzae (strain ATCC 42149 / RIB 40) (Yellow koji mold), this protein is Lactonohydrolase oryH.